A 315-amino-acid polypeptide reads, in one-letter code: Phosphatidylglycerol--prolipoprotein diacylglyceryl transferase (315 aa).

A run of 2 helical transmembrane segments spans residues 19-39 (FTIH…VWIL) and 93-113 (VWEG…VAFL). Arginine 141 lines the a 1,2-diacyl-sn-glycero-3-phospho-(1'-sn-glycerol) pocket. A run of 2 helical transmembrane segments spans residues 188 to 208 (LFHP…ALII) and 256 to 276 (VWTA…LYQY).

Belongs to the Lgt family.

It is found in the cell membrane. The catalysed reaction is L-cysteinyl-[prolipoprotein] + a 1,2-diacyl-sn-glycero-3-phospho-(1'-sn-glycerol) = an S-1,2-diacyl-sn-glyceryl-L-cysteinyl-[prolipoprotein] + sn-glycerol 1-phosphate + H(+). It functions in the pathway protein modification; lipoprotein biosynthesis (diacylglyceryl transfer). Functionally, catalyzes the transfer of the diacylglyceryl group from phosphatidylglycerol to the sulfhydryl group of the N-terminal cysteine of a prolipoprotein, the first step in the formation of mature lipoproteins. The polypeptide is Phosphatidylglycerol--prolipoprotein diacylglyceryl transferase (Bifidobacterium longum (strain NCC 2705)).